Reading from the N-terminus, the 408-residue chain is Succinylornithine transaminase (408 aa).

An N6-(pyridoxal phosphate)lysine modification is found at Lys-252.

Belongs to the class-III pyridoxal-phosphate-dependent aminotransferase family. AstC subfamily. It depends on pyridoxal 5'-phosphate as a cofactor.

The enzyme catalyses N(2)-succinyl-L-ornithine + 2-oxoglutarate = N-succinyl-L-glutamate 5-semialdehyde + L-glutamate. The protein operates within amino-acid degradation; L-arginine degradation via AST pathway; L-glutamate and succinate from L-arginine: step 3/5. Functionally, catalyzes the transamination of N(2)-succinylornithine and alpha-ketoglutarate into N(2)-succinylglutamate semialdehyde and glutamate. Can also act as an acetylornithine aminotransferase. The chain is Succinylornithine transaminase from Salmonella choleraesuis (strain SC-B67).